The sequence spans 345 residues: DQNGKVVNEKMEPKLPKETLLKMYKTAVLGRNADIKALQYQRQGRMLTYAPNMGQEAAQIGMAAAMEPQDWNSPMYRELNTLLYRGDKLENVFLYWYGNERGSIKPEGVKILPTNIIIGSQSNIAAGLAMASKIRKTNEVTAFTIGDGGTAHGEFYEGLNFAASFKAPVVAVIQNNQWAISTPVRKASNSETLAQKGVAFGIPYIQVDGNDMLAMYVASKEAMDRARKGDGPTLIEAFTYRMGPHTTSDDPCSIYRTKEEENEWAKKDQIARFKTYLINKGYWSEEEDKKLEEEVLAEINDTFKKVESYGANVELIEIFEHTYAEMTPQLKEQYEEHKKYLEGVK.

In terms of assembly, heterodimer of an alpha and a beta chain. Thiamine diphosphate is required as a cofactor.

The enzyme catalyses N(6)-[(R)-lipoyl]-L-lysyl-[protein] + pyruvate + H(+) = N(6)-[(R)-S(8)-acetyldihydrolipoyl]-L-lysyl-[protein] + CO2. Functionally, the pyruvate dehydrogenase complex catalyzes the overall conversion of pyruvate to acetyl-CoA and CO(2). It contains multiple copies of three enzymatic components: pyruvate dehydrogenase (E1), dihydrolipoamide acetyltransferase (E2) and lipoamide dehydrogenase (E3). The protein is Pyruvate dehydrogenase E1 component subunit alpha (pdhA) of Acholeplasma laidlawii.